Here is a 322-residue protein sequence, read N- to C-terminus: Aspartate carbamoyltransferase catalytic subunit (322 aa).

Carbamoyl phosphate-binding residues include arginine 65 and threonine 66. Position 93 (lysine 93) interacts with L-aspartate. Carbamoyl phosphate contacts are provided by arginine 115, histidine 143, and glutamine 146. Residues arginine 176 and arginine 230 each contribute to the L-aspartate site. Carbamoyl phosphate is bound by residues glycine 271 and proline 272.

This sequence belongs to the aspartate/ornithine carbamoyltransferase superfamily. ATCase family. Heterododecamer (2C3:3R2) of six catalytic PyrB chains organized as two trimers (C3), and six regulatory PyrI chains organized as three dimers (R2).

It carries out the reaction carbamoyl phosphate + L-aspartate = N-carbamoyl-L-aspartate + phosphate + H(+). It participates in pyrimidine metabolism; UMP biosynthesis via de novo pathway; (S)-dihydroorotate from bicarbonate: step 2/3. Catalyzes the condensation of carbamoyl phosphate and aspartate to form carbamoyl aspartate and inorganic phosphate, the committed step in the de novo pyrimidine nucleotide biosynthesis pathway. This chain is Aspartate carbamoyltransferase catalytic subunit, found in Brucella abortus (strain S19).